The sequence spans 427 residues: Histidinol dehydrogenase (427 aa).

NAD(+)-binding residues include Tyr127, Gln187, and Asn210. 3 residues coordinate substrate: Ser233, Gln255, and His258. Zn(2+)-binding residues include Gln255 and His258. Catalysis depends on proton acceptor residues Glu323 and His324. Residues His324, Asp357, Glu411, and His416 each contribute to the substrate site. Asp357 provides a ligand contact to Zn(2+). Residue His416 coordinates Zn(2+).

The protein belongs to the histidinol dehydrogenase family. Zn(2+) is required as a cofactor.

It carries out the reaction L-histidinol + 2 NAD(+) + H2O = L-histidine + 2 NADH + 3 H(+). It participates in amino-acid biosynthesis; L-histidine biosynthesis; L-histidine from 5-phospho-alpha-D-ribose 1-diphosphate: step 9/9. Functionally, catalyzes the sequential NAD-dependent oxidations of L-histidinol to L-histidinaldehyde and then to L-histidine. The polypeptide is Histidinol dehydrogenase (Streptococcus mutans serotype c (strain ATCC 700610 / UA159)).